The chain runs to 451 residues: UDP-N-acetylmuramate--L-alanine ligase (451 aa).

Position 110–116 (110–116 (GTHGKTT)) interacts with ATP.

Belongs to the MurCDEF family.

The protein localises to the cytoplasm. It carries out the reaction UDP-N-acetyl-alpha-D-muramate + L-alanine + ATP = UDP-N-acetyl-alpha-D-muramoyl-L-alanine + ADP + phosphate + H(+). Its pathway is cell wall biogenesis; peptidoglycan biosynthesis. Functionally, cell wall formation. This Francisella tularensis subsp. tularensis (strain WY96-3418) protein is UDP-N-acetylmuramate--L-alanine ligase.